The following is a 481-amino-acid chain: 3-isopropylmalate dehydratase large subunit (481 aa).

3 residues coordinate [4Fe-4S] cluster: C357, C417, and C420.

This sequence belongs to the aconitase/IPM isomerase family. LeuC type 1 subfamily. As to quaternary structure, heterodimer of LeuC and LeuD. [4Fe-4S] cluster is required as a cofactor.

It carries out the reaction (2R,3S)-3-isopropylmalate = (2S)-2-isopropylmalate. The protein operates within amino-acid biosynthesis; L-leucine biosynthesis; L-leucine from 3-methyl-2-oxobutanoate: step 2/4. Functionally, catalyzes the isomerization between 2-isopropylmalate and 3-isopropylmalate, via the formation of 2-isopropylmaleate. The chain is 3-isopropylmalate dehydratase large subunit from Maricaulis maris (strain MCS10) (Caulobacter maris).